A 350-amino-acid polypeptide reads, in one-letter code: tRNA uridine(34) hydroxylase (350 aa).

The region spanning 146 to 240 (DDPDALFIDM…YARKAREQGL (95 aa)) is the Rhodanese domain. Cys-200 functions as the Cysteine persulfide intermediate in the catalytic mechanism.

Belongs to the TrhO family.

The catalysed reaction is uridine(34) in tRNA + AH2 + O2 = 5-hydroxyuridine(34) in tRNA + A + H2O. Its function is as follows. Catalyzes oxygen-dependent 5-hydroxyuridine (ho5U) modification at position 34 in tRNAs, the first step in 5-carboxymethoxyuridine (cmo5U) biosynthesis. May be part of an alternate pathway, which is able to bypass cmo5U biogenesis in a subset of tRNAs under aerobic conditions. This chain is tRNA uridine(34) hydroxylase, found in Escherichia coli O17:K52:H18 (strain UMN026 / ExPEC).